The chain runs to 293 residues: Nucleotide-binding protein DvMF_0424 (293 aa).

An ATP-binding site is contributed by 13–20; the sequence is GLSGAGKS. 65–68 serves as a coordination point for GTP; it reads DLRE.

This sequence belongs to the RapZ-like family.

Functionally, displays ATPase and GTPase activities. This chain is Nucleotide-binding protein DvMF_0424, found in Nitratidesulfovibrio vulgaris (strain DSM 19637 / Miyazaki F) (Desulfovibrio vulgaris).